Reading from the N-terminus, the 131-residue chain is Arsenate reductase 2 (131 aa).

Active-site nucleophile residues include Cys-10, Cys-82, and Cys-89. 2 disulfides stabilise this stretch: Cys-10-Cys-82 and Cys-82-Cys-89.

Belongs to the low molecular weight phosphotyrosine protein phosphatase family. Thioredoxin-coupled ArsC subfamily.

The protein resides in the cytoplasm. It carries out the reaction arsenate + [thioredoxin]-dithiol + H(+) = arsenite + [thioredoxin]-disulfide + H2O. Its function is as follows. Catalyzes the reduction of arsenate [As(V)] to arsenite [As(III)]. The sequence is that of Arsenate reductase 2 from Staphylococcus saprophyticus subsp. saprophyticus (strain ATCC 15305 / DSM 20229 / NCIMB 8711 / NCTC 7292 / S-41).